An 842-amino-acid chain; its full sequence is Glycogen phosphorylase, muscle form (842 aa).

Serine 2 bears the N-acetylserine mark. Position 15 is a phosphoserine; by PHK; in form phosphorylase A (serine 15). Residues aspartate 43 and tyrosine 76 each coordinate AMP. Phosphotyrosine is present on residues tyrosine 204 and tyrosine 227. 310–319 (RRFKSSKFGC) contacts AMP. A Phosphoserine modification is found at serine 430. Residue tyrosine 473 is modified to Phosphotyrosine. Serine 514 bears the Phosphoserine mark. N6-(pyridoxal phosphate)lysine is present on lysine 681. A phosphoserine mark is found at serine 747 and serine 748.

Belongs to the glycogen phosphorylase family. As to quaternary structure, homodimer. Homotetramer; to form the enzymatically active phosphorylase A. Pyridoxal 5'-phosphate serves as cofactor. Phosphorylation of Ser-15 converts phosphorylase B (unphosphorylated) to phosphorylase A.

It carries out the reaction [(1-&gt;4)-alpha-D-glucosyl](n) + phosphate = [(1-&gt;4)-alpha-D-glucosyl](n-1) + alpha-D-glucose 1-phosphate. Allosterically regulated through the non-covalent binding of metabolites, being activated by AMP and inhibited by ATP, ADP, and glucose-6-phosphate. The activity is also controlled by post-translational modifications including phosphorylation. Its function is as follows. Allosteric enzyme that catalyzes the rate-limiting step in glycogen catabolism, the phosphorolytic cleavage of glycogen to produce glucose-1-phosphate, and plays a central role in maintaining cellular and organismal glucose homeostasis. In Homo sapiens (Human), this protein is Glycogen phosphorylase, muscle form.